Here is a 101-residue protein sequence, read N- to C-terminus: MYISRNMDHWNTFIETLRTAFKEGKEQEFLTLLLTPDERDAVGLRLQIVAQLLDKNVPQREIQQNLSTSAATITRGSNMLKMMDPDFLAWVKEQVDAETQS.

A DNA-binding region spans residues 59 to 82; that stretch reads QREIQQNLSTSAATITRGSNMLKM.

This sequence belongs to the TrpR family. Homodimer.

It is found in the cytoplasm. Functionally, this protein is an aporepressor. When complexed with L-tryptophan it binds the operator region of the trp operon and prevents the initiation of transcription. The polypeptide is Trp operon repressor homolog (Actinobacillus succinogenes (strain ATCC 55618 / DSM 22257 / CCUG 43843 / 130Z)).